Reading from the N-terminus, the 118-residue chain is Cysteine--tRNA ligase (118 aa).

Cys-28 is a binding site for Zn(2+). The short motif at 30–40 (PTVYNYIHIGN) is the 'HIGH' region element.

The protein belongs to the class-I aminoacyl-tRNA synthetase family. In terms of assembly, monomer. Requires Zn(2+) as cofactor.

It is found in the cytoplasm. The catalysed reaction is tRNA(Cys) + L-cysteine + ATP = L-cysteinyl-tRNA(Cys) + AMP + diphosphate. This is Cysteine--tRNA ligase (cysS) from Staphylococcus xylosus.